The primary structure comprises 378 residues: Carbamoyl phosphate synthase small chain (378 aa).

The segment at 1 to 188 (MSILKEAYLY…THFAYGTSPN (188 aa)) is CPSase. L-glutamine contacts are provided by serine 49, glycine 244, and glycine 246. The 187-residue stretch at 192 to 378 (KVVAIDFGAK…FEEFAKLCCK (187 aa)) folds into the Glutamine amidotransferase type-1 domain. Catalysis depends on cysteine 272, which acts as the Nucleophile. L-glutamine-binding residues include leucine 273, glutamine 276, asparagine 314, and tyrosine 317. Catalysis depends on residues histidine 355 and glutamate 357.

Belongs to the CarA family. Composed of two chains; the small (or glutamine) chain promotes the hydrolysis of glutamine to ammonia, which is used by the large (or ammonia) chain to synthesize carbamoyl phosphate. Tetramer of heterodimers (alpha,beta)4.

It catalyses the reaction hydrogencarbonate + L-glutamine + 2 ATP + H2O = carbamoyl phosphate + L-glutamate + 2 ADP + phosphate + 2 H(+). The enzyme catalyses L-glutamine + H2O = L-glutamate + NH4(+). The protein operates within amino-acid biosynthesis; L-arginine biosynthesis; carbamoyl phosphate from bicarbonate: step 1/1. It functions in the pathway pyrimidine metabolism; UMP biosynthesis via de novo pathway; (S)-dihydroorotate from bicarbonate: step 1/3. Its function is as follows. Small subunit of the glutamine-dependent carbamoyl phosphate synthetase (CPSase). CPSase catalyzes the formation of carbamoyl phosphate from the ammonia moiety of glutamine, carbonate, and phosphate donated by ATP, constituting the first step of 2 biosynthetic pathways, one leading to arginine and/or urea and the other to pyrimidine nucleotides. The small subunit (glutamine amidotransferase) binds and cleaves glutamine to supply the large subunit with the substrate ammonia. The sequence is that of Carbamoyl phosphate synthase small chain from Helicobacter hepaticus (strain ATCC 51449 / 3B1).